A 127-amino-acid polypeptide reads, in one-letter code: Large ribosomal subunit protein bL12 (127 aa).

Belongs to the bacterial ribosomal protein bL12 family. Homodimer. Part of the ribosomal stalk of the 50S ribosomal subunit. Forms a multimeric L10(L12)X complex, where L10 forms an elongated spine to which 2 to 4 L12 dimers bind in a sequential fashion. Binds GTP-bound translation factors.

Its function is as follows. Forms part of the ribosomal stalk which helps the ribosome interact with GTP-bound translation factors. Is thus essential for accurate translation. The sequence is that of Large ribosomal subunit protein bL12 from Streptomyces coelicolor (strain ATCC BAA-471 / A3(2) / M145).